Reading from the N-terminus, the 118-residue chain is Ribonuclease P protein component (118 aa).

This sequence belongs to the RnpA family. In terms of assembly, consists of a catalytic RNA component (M1 or rnpB) and a protein subunit.

It catalyses the reaction Endonucleolytic cleavage of RNA, removing 5'-extranucleotides from tRNA precursor.. Functionally, RNaseP catalyzes the removal of the 5'-leader sequence from pre-tRNA to produce the mature 5'-terminus. It can also cleave other RNA substrates such as 4.5S RNA. The protein component plays an auxiliary but essential role in vivo by binding to the 5'-leader sequence and broadening the substrate specificity of the ribozyme. In Vibrio vulnificus (strain CMCP6), this protein is Ribonuclease P protein component.